The primary structure comprises 255 residues: Zinc import ATP-binding protein ZnuC (255 aa).

Residues 4-219 (VDVDGLSLRY…PEYRALFGTG (216 aa)) form the ABC transporter domain. 36–43 (GPNGSGKT) is a binding site for ATP. A disordered region spans residues 234-255 (EHDHHDGCAHGQATEDRTEAAE).

Belongs to the ABC transporter superfamily. Zinc importer (TC 3.A.1.15.5) family. In terms of assembly, the complex is composed of two ATP-binding proteins (ZnuC), two transmembrane proteins (ZnuB) and a solute-binding protein (ZnuA).

It localises to the cell inner membrane. It catalyses the reaction Zn(2+)(out) + ATP(in) + H2O(in) = Zn(2+)(in) + ADP(in) + phosphate(in) + H(+)(in). Its function is as follows. Part of the ABC transporter complex ZnuABC involved in zinc import. Responsible for energy coupling to the transport system. The protein is Zinc import ATP-binding protein ZnuC of Roseobacter denitrificans (strain ATCC 33942 / OCh 114) (Erythrobacter sp. (strain OCh 114)).